Reading from the N-terminus, the 197-residue chain is Adenylate kinase (197 aa).

Glycine 16–threonine 21 contributes to the ATP binding site. The interval serine 36–valine 65 is NMP. AMP contacts are provided by residues threonine 37, arginine 42, glutamine 63–valine 65, glycine 90–arginine 93, and glutamine 97. The LID stretch occupies residues glutamate 131 to aspartate 147. ATP is bound at residue arginine 132. AMP is bound by residues arginine 144 and arginine 155. Glycine 183 contacts ATP.

This sequence belongs to the adenylate kinase family. In terms of assembly, monomer.

It is found in the cytoplasm. It carries out the reaction AMP + ATP = 2 ADP. Its pathway is purine metabolism; AMP biosynthesis via salvage pathway; AMP from ADP: step 1/1. Catalyzes the reversible transfer of the terminal phosphate group between ATP and AMP. Plays an important role in cellular energy homeostasis and in adenine nucleotide metabolism. The chain is Adenylate kinase from Deinococcus geothermalis (strain DSM 11300 / CIP 105573 / AG-3a).